The primary structure comprises 463 residues: Cysteine--tRNA ligase (463 aa).

A Zn(2+)-binding site is contributed by C27. A 'HIGH' region motif is present at residues 29–39 (MTVYDYCHLGH). Positions 208, 233, and 237 each coordinate Zn(2+). The 'KMSKS' region signature appears at 265–269 (KMSKS). Position 268 (K268) interacts with ATP.

It belongs to the class-I aminoacyl-tRNA synthetase family. As to quaternary structure, monomer. The cofactor is Zn(2+).

The protein localises to the cytoplasm. The enzyme catalyses tRNA(Cys) + L-cysteine + ATP = L-cysteinyl-tRNA(Cys) + AMP + diphosphate. The chain is Cysteine--tRNA ligase from Marinobacter nauticus (strain ATCC 700491 / DSM 11845 / VT8) (Marinobacter aquaeolei).